Here is a 429-residue protein sequence, read N- to C-terminus: Chaperone SurA (429 aa).

The signal sequence occupies residues 1–19 (MKKTLLALLIASVMQSALA). PpiC domains follow at residues 172 to 273 (RTEY…KLVD) and 283 to 381 (VEQY…LVEG).

It is found in the periplasm. It carries out the reaction [protein]-peptidylproline (omega=180) = [protein]-peptidylproline (omega=0). In terms of biological role, chaperone involved in the correct folding and assembly of outer membrane proteins. Recognizes specific patterns of aromatic residues and the orientation of their side chains, which are found more frequently in integral outer membrane proteins. May act in both early periplasmic and late outer membrane-associated steps of protein maturation. This Chromobacterium violaceum (strain ATCC 12472 / DSM 30191 / JCM 1249 / CCUG 213 / NBRC 12614 / NCIMB 9131 / NCTC 9757 / MK) protein is Chaperone SurA.